Consider the following 197-residue polypeptide: MARYRGPRVKIVRRLGELPGLTTKIPNRNYPAGQHGPSSGMTKMSQYRVRLQEKQKLRYNYGVSEKQLLSYVRRARRMKGPTGELLLQMLEMRLDAVVYRLGFAPTIRAARQYVSHGLVTVNGQAVTIPSYQCSVGEVIKSNSAPIVEHAKTFGGVVPSHLSVDKNNATGKVERNVTRSQIGLTVNELLIIEFYSRK.

In terms of domain architecture, S4 RNA-binding spans 92–153 (MRLDAVVYRL…APIVEHAKTF (62 aa)).

It belongs to the universal ribosomal protein uS4 family. Part of the 30S ribosomal subunit. Contacts protein S5. The interaction surface between S4 and S5 is involved in control of translational fidelity.

The protein localises to the plastid. It localises to the chloroplast. Functionally, one of the primary rRNA binding proteins, it binds directly to 16S rRNA where it nucleates assembly of the body of the 30S subunit. With S5 and S12 plays an important role in translational accuracy. This chain is Small ribosomal subunit protein uS4c (rps4), found in Ostreococcus tauri.